A 442-amino-acid polypeptide reads, in one-letter code: NAD kinase 2, mitochondrial (442 aa).

The transit peptide at 1 to 62 (MTCYRGFLLG…RELAGCGSRA (62 aa)) directs the protein to the mitochondrion. The span at 24–36 (RGPGAGGPAARPR) shows a compositional bias: low complexity. Positions 24–60 (RGPGAGGPAARPRLGGDGGGRRHLGQGQPRELAGCGS) are disordered. N6-acetyllysine; alternate is present on Lys-76. Lys-76 carries the post-translational modification N6-succinyllysine; alternate. Position 188 is a phosphoserine (Ser-188). An N6-succinyllysine modification is found at Lys-302. Residue Lys-317 is modified to N6-acetyllysine; alternate. Lys-317 carries the post-translational modification N6-succinyllysine; alternate. Ser-367 carries the phosphoserine modification. Residue Lys-397 is modified to N6-acetyllysine.

The protein belongs to the NAD kinase family. Homodimer. As to expression, widely expressed.

It is found in the mitochondrion. It catalyses the reaction NAD(+) + ATP = ADP + NADP(+) + H(+). Its activity is regulated as follows. Inhibited by NADH, NADPH and NADP(+). Mitochondrial NAD(+) kinase that phosphorylates NAD(+) to yield NADP(+). Can use both ATP or inorganic polyphosphate as the phosphoryl donor. Also has weak NADH kinase activity in vitro; however NADH kinase activity is much weaker than the NAD(+) kinase activity and may not be relevant in vivo. In Homo sapiens (Human), this protein is NAD kinase 2, mitochondrial (NADK2).